The primary structure comprises 200 residues: Cytochrome c biogenesis ATP-binding export protein CcmA (200 aa).

The ABC transporter domain occupies leucine 2–leucine 200. Position 34 to 41 (glycine 34 to threonine 41) interacts with ATP.

The protein belongs to the ABC transporter superfamily. CcmA exporter (TC 3.A.1.107) family. In terms of assembly, the complex is composed of two ATP-binding proteins (CcmA) and two transmembrane proteins (CcmB).

It localises to the cell inner membrane. The catalysed reaction is heme b(in) + ATP + H2O = heme b(out) + ADP + phosphate + H(+). Its function is as follows. Part of the ABC transporter complex CcmAB involved in the biogenesis of c-type cytochromes; once thought to export heme, this seems not to be the case, but its exact role is uncertain. Responsible for energy coupling to the transport system. This Legionella pneumophila protein is Cytochrome c biogenesis ATP-binding export protein CcmA.